Here is a 165-residue protein sequence, read N- to C-terminus: NADH-ubiquinone oxidoreductase chain 6 (165 aa).

Helical transmembrane passes span 1–21 (MVVY…FYSL), 47–67 (SFVP…VFPY), 83–103 (GEVV…FDNF), and 130–150 (GVLV…ALII).

Belongs to the complex I subunit 6 family.

Its subcellular location is the mitochondrion membrane. It catalyses the reaction a ubiquinone + NADH + 5 H(+)(in) = a ubiquinol + NAD(+) + 4 H(+)(out). Core subunit of the mitochondrial membrane respiratory chain NADH dehydrogenase (Complex I) that is believed to belong to the minimal assembly required for catalysis. Complex I functions in the transfer of electrons from NADH to the respiratory chain. The immediate electron acceptor for the enzyme is believed to be ubiquinone. The protein is NADH-ubiquinone oxidoreductase chain 6 (ND6) of Strongylocentrotus purpuratus (Purple sea urchin).